The chain runs to 294 residues: tRNA dimethylallyltransferase (294 aa).

An ATP-binding site is contributed by 10–17 (GITASGKS). 12–17 (TASGKS) provides a ligand contact to substrate. The interval 36–39 (DSKQ) is interaction with substrate tRNA.

The protein belongs to the IPP transferase family. Monomer. The cofactor is Mg(2+).

The enzyme catalyses adenosine(37) in tRNA + dimethylallyl diphosphate = N(6)-dimethylallyladenosine(37) in tRNA + diphosphate. Its function is as follows. Catalyzes the transfer of a dimethylallyl group onto the adenine at position 37 in tRNAs that read codons beginning with uridine, leading to the formation of N6-(dimethylallyl)adenosine (i(6)A). This chain is tRNA dimethylallyltransferase, found in Wolbachia sp. subsp. Drosophila simulans (strain wRi).